Here is a 147-residue protein sequence, read N- to C-terminus: uncharacterized protein (147 aa).

The 94-residue stretch at 52–145 folds into the Rhodanese domain; that stretch reads YDRCLLIIDA…WLSNNYPTVC (94 aa).

This is an uncharacterized protein from Buchnera aphidicola subsp. Baizongia pistaciae (strain Bp).